The primary structure comprises 421 residues: F-box only protein 9 (421 aa).

A disordered region spans residues 1–63 (MAESNQNTDG…AELRRRQETA (63 aa)). Acidic residues predominate over residues 11–20 (AVEEGEDENT). The segment covering 40 to 52 (LQPSSGGQRSFSR) has biased composition (polar residues). The span at 54–63 (AELRRRQETA) shows a compositional bias: basic and acidic residues. The stretch at 68–101 (ARELFLKAVEEEQNGAVYEAIKYYKSAMQLVPDI) is one TPR repeat. The F-box domain maps to 158–209 (QVHISALPFEVLMYIFRWVVSCDLDLRALEQLSLVCRGFYICARDPEIWRSA).

Part of the SCF (SKP1-CUL1-F-box) E3 ubiquitin-protein ligase complex SCF(fbxo9).

It is found in the cytoplasm. Its pathway is protein modification; protein ubiquitination. Substrate recognition component of a SCF (SKP1-CUL1-F-box protein) E3 ubiquitin-protein ligase complex which mediates the ubiquitination and subsequent proteasomal degradation of target proteins and acts as a regulator of mTOR signaling. The protein is F-box only protein 9 (fbxo9) of Danio rerio (Zebrafish).